We begin with the raw amino-acid sequence, 308 residues long: Cis-prenyltransferase 4, chloroplastic (308 aa).

A chloroplast-targeting transit peptide spans 1-45 (MAFSLQLQQIFVSYTRFCSQPKSITNPLISLKLPSIHPLAFAQNA). Aspartate 84 is a catalytic residue.

The protein belongs to the UPP synthase family. Mg(2+) is required as a cofactor. In terms of tissue distribution, widely expressed.

It is found in the plastid. It localises to the chloroplast. Its function is as follows. Uses neryl diphosphate and geranyl diphosphate to catalyze the cis-prenyl chain elongation and produce polyprenyl diphosphate with a chain of 55 carbons. This Solanum lycopersicum (Tomato) protein is Cis-prenyltransferase 4, chloroplastic.